A 517-amino-acid chain; its full sequence is Ovoinhibitor (517 aa).

Kazal-like domains follow at residues 67–132 (FGIE…ECRP), 133–197 (KHVT…ECKL), 198–263 (EIGS…KCRQ), 264–329 (EIPE…RCKE), 330–394 (RSTP…RCRE), 395–460 (EVPE…RCEE), and 461–517 (DITK…MAAC). The N-linked (GlcNAc...) asparagine glycan is linked to N72. 21 cysteine pairs are disulfide-bonded: C73–C112, C90–C109, C98–C130, C139–C177, C155–C174, C163–C195, C204–C243, C221–C240, C229–C261, C270–C309, C287–C306, C295–C327, C336–C374, C352–C371, C360–C392, C401–C440, C418–C437, C426–C458, C467–C499, C477–C496, and C485–C517. Residue N186 is glycosylated (N-linked (GlcNAc...) asparagine). N-linked (GlcNAc...) asparagine glycosylation occurs at N506.

Post-translationally, glycosylated. As to expression, expressed in oviduct (at protein level). Expressed in egg white (at protein level). Expressed in egg yolk plasma of non-fertilized eggs (at protein level). Expressed in the magnum of the oviduct (at protein level). Expressed in oviduct. Expressed in liver. Expressed in the cortico-medullary border region of the bursa of Fabricius by the bursal secretory dendritic-like cells. Highly expressed in the magnum of the oviduct, and at a lower level in uterus. Weakly expressed in white isthmus and very weakly in infundibulum. Not expressed in duodenum and kidney.

The protein localises to the secreted. Its function is as follows. Serine protease inhibitor involved in antimicrobial egg defense preventing contamination of table eggs (non-fertilized eggs) and protecting the chick embryo (fertilized eggs). Inhibits trypsin, chymotrypsin, elastase, subtilisin and a proteinase of fungus Aspergillus oryzae. Inhibits calcium-activated potassium channels KCNMA1 (bovine) and slo (Drosophila). Has antibacterial activity against B.thuringiensis LMSA 3.06.004, but not against S.aureus CIP 103 811, P.aeruginosa PAO1, B.cereus ATCC6464 or B.subtilis ATCC 6633. This is Ovoinhibitor from Gallus gallus (Chicken).